The sequence spans 460 residues: Elongation factor 1-alpha (460 aa).

Position 2 is a n,N,N-trimethylglycine (glycine 2). Lysine 3 carries the post-translational modification N6,N6-dimethyllysine; alternate. Lysine 3 carries the N6-methyllysine; alternate modification. Positions 6–241 (KQHINIVVIG…DAIEPPVRPT (236 aa)) constitute a tr-type G domain. The segment at 15–22 (GHVDSGKS) is G1. 15–22 (GHVDSGKS) provides a ligand contact to GTP. Lysine 31 carries the N6-methyllysine modification. The G2 stretch occupies residues 71–75 (GITID). Position 80 is an N6,N6,N6-trimethyllysine (lysine 80). The G3 stretch occupies residues 92–95 (DAPG). Residues 92-96 (DAPGH) and 154-157 (NKMD) each bind GTP. The G4 stretch occupies residues 154 to 157 (NKMD). Residues 193 to 195 (SGF) are G5. Lysine 317 bears the N6,N6-dimethyllysine; alternate mark. Lysine 317 carries the N6-methyllysine; alternate modification. Lysine 391 carries the N6-methyllysine modification.

It belongs to the TRAFAC class translation factor GTPase superfamily. Classic translation factor GTPase family. EF-Tu/EF-1A subfamily.

Its subcellular location is the cytoplasm. In terms of biological role, this protein promotes the GTP-dependent binding of aminoacyl-tRNA to the A-site of ribosomes during protein biosynthesis. The chain is Elongation factor 1-alpha (tef1) from Aspergillus oryzae (strain ATCC 42149 / RIB 40) (Yellow koji mold).